The sequence spans 118 residues: Na(+)/H(+) antiporter subunit G1 (118 aa).

A run of 3 helical transmembrane segments spans residues 9 to 29, 47 to 67, and 69 to 89; these read VSIIFVVLGALISAFAATGLI, LGAMFLLFGAFLYFIGTEGYV, and MQLIIGIIFVFITGPLSSHLI.

Belongs to the CPA3 antiporters (TC 2.A.63) subunit G family. May form a heterooligomeric complex that consists of seven subunits: mnhA1, mnhB1, mnhC1, mnhD1, mnhE1, mnhF1 and mnhG1.

Its subcellular location is the cell membrane. Mnh complex is a Na(+)/H(+) antiporter involved in Na(+) excretion. In Staphylococcus epidermidis (strain ATCC 35984 / DSM 28319 / BCRC 17069 / CCUG 31568 / BM 3577 / RP62A), this protein is Na(+)/H(+) antiporter subunit G1 (mnhG1).